We begin with the raw amino-acid sequence, 208 residues long: Protein-L-isoaspartate O-methyltransferase (208 aa).

The active site involves S59.

The protein belongs to the methyltransferase superfamily. L-isoaspartyl/D-aspartyl protein methyltransferase family.

The protein localises to the cytoplasm. It catalyses the reaction [protein]-L-isoaspartate + S-adenosyl-L-methionine = [protein]-L-isoaspartate alpha-methyl ester + S-adenosyl-L-homocysteine. In terms of biological role, catalyzes the methyl esterification of L-isoaspartyl residues in peptides and proteins that result from spontaneous decomposition of normal L-aspartyl and L-asparaginyl residues. It plays a role in the repair and/or degradation of damaged proteins. The protein is Protein-L-isoaspartate O-methyltransferase of Pectobacterium carotovorum subsp. carotovorum (strain PC1).